The chain runs to 29 residues: Cyclotide mech-7 (29 aa).

A cross-link (cyclopeptide (Gly-Asp)) is located at residues 1–29; it reads GIPICGETCTIGTCNTPGCTCSWPVCTRD. Cystine bridges form between Cys-5/Cys-19, Cys-9/Cys-21, and Cys-14/Cys-26.

Post-translationally, this is a cyclic peptide. In terms of processing, contains 3 disulfide bonds.

In terms of biological role, probably participates in a plant defense mechanism (Potential). Binds to and induces leakage in phospholipd membranes, particularly ones containing 1-palmitoyl-2-oleophosphatidylethanolamine (POPE). This chain is Cyclotide mech-7, found in Melicytus chathamicus (Chatham Island mahoe).